A 297-amino-acid chain; its full sequence is Ribosomal RNA small subunit methyltransferase H (297 aa).

S-adenosyl-L-methionine-binding positions include 37-39 (GGH), E56, F87, D102, and H109.

The protein belongs to the methyltransferase superfamily. RsmH family.

Its subcellular location is the cytoplasm. The catalysed reaction is cytidine(1402) in 16S rRNA + S-adenosyl-L-methionine = N(4)-methylcytidine(1402) in 16S rRNA + S-adenosyl-L-homocysteine + H(+). Functionally, specifically methylates the N4 position of cytidine in position 1402 (C1402) of 16S rRNA. The sequence is that of Ribosomal RNA small subunit methyltransferase H from Borrelia recurrentis (strain A1).